Here is a 313-residue protein sequence, read N- to C-terminus: tRNA dimethylallyltransferase (313 aa).

11-18 (GPTAGGKT) provides a ligand contact to ATP. 13–18 (TAGGKT) contacts substrate. Interaction with substrate tRNA stretches follow at residues 36–39 (DSAL), 160–164 (QRIGR), and 243–248 (RCVGYR).

Belongs to the IPP transferase family. As to quaternary structure, monomer. It depends on Mg(2+) as a cofactor.

It catalyses the reaction adenosine(37) in tRNA + dimethylallyl diphosphate = N(6)-dimethylallyladenosine(37) in tRNA + diphosphate. Its function is as follows. Catalyzes the transfer of a dimethylallyl group onto the adenine at position 37 in tRNAs that read codons beginning with uridine, leading to the formation of N6-(dimethylallyl)adenosine (i(6)A). The chain is tRNA dimethylallyltransferase from Neisseria meningitidis serogroup A / serotype 4A (strain DSM 15465 / Z2491).